Consider the following 272-residue polypeptide: Undecaprenyl-diphosphatase (272 aa).

The next 8 helical transmembrane spans lie at 1–21 (MSTL…FLPI), 39–59 (QGLA…MMYF), 91–111 (WWIL…KDFI), 117–137 (SALV…FADI), 151–171 (LGLK…IPGT), 196–216 (FLLS…KLIL), 228–248 (LGSL…LILL), and 251–271 (LGMM…LWFI).

The protein belongs to the UppP family.

It is found in the cell inner membrane. The catalysed reaction is di-trans,octa-cis-undecaprenyl diphosphate + H2O = di-trans,octa-cis-undecaprenyl phosphate + phosphate + H(+). Functionally, catalyzes the dephosphorylation of undecaprenyl diphosphate (UPP). Confers resistance to bacitracin. The chain is Undecaprenyl-diphosphatase from Colwellia psychrerythraea (strain 34H / ATCC BAA-681) (Vibrio psychroerythus).